An 86-amino-acid polypeptide reads, in one-letter code: MVIWKVVNKAPLALIKFYRAILSPMFPPSCRFYPTCSAYALEAFETHNFFKASWLSLWRILRCNPFSKGGFDPVPPHDGVPGKKED.

A disordered region spans residues 66–86 (FSKGGFDPVPPHDGVPGKKED).

Belongs to the UPF0161 family.

The protein resides in the cell inner membrane. Could be involved in insertion of integral membrane proteins into the membrane. The protein is Putative membrane protein insertion efficiency factor of Chlorobium luteolum (strain DSM 273 / BCRC 81028 / 2530) (Pelodictyon luteolum).